A 250-amino-acid chain; its full sequence is MSFPYFISPEQAMRERSELARKGIARGRSVVALAYADGVLFVAENPSRSLQKVSELYDRVGFAAVGRFNEFNNLRSGGIRFADTQGYAYSRRDVTGRQLANVYAQTLGTIFTEQAKPYEVELCVAEVAHFGESKAPELYRITYDGSIADEPHFVVMGGATEPIIAKLNDSYTENAELADAVRIAVDALESGGNGAERRTLGPSTLEVAILDANRPRRAFRRITGSALEALLPQRDAEASADAGAADKPAE.

Belongs to the peptidase T1A family. As to quaternary structure, the 20S proteasome core is composed of 14 alpha and 14 beta subunits that assemble into four stacked heptameric rings, resulting in a barrel-shaped structure. The two inner rings, each composed of seven catalytic beta subunits, are sandwiched by two outer rings, each composed of seven alpha subunits. The catalytic chamber with the active sites is on the inside of the barrel. Has a gated structure, the ends of the cylinder being occluded by the N-termini of the alpha-subunits. Is capped by the proteasome-associated ATPase, ARC.

It localises to the cytoplasm. The protein operates within protein degradation; proteasomal Pup-dependent pathway. With respect to regulation, the formation of the proteasomal ATPase ARC-20S proteasome complex, likely via the docking of the C-termini of ARC into the intersubunit pockets in the alpha-rings, may trigger opening of the gate for substrate entry. Interconversion between the open-gate and close-gate conformations leads to a dynamic regulation of the 20S proteasome proteolysis activity. In terms of biological role, component of the proteasome core, a large protease complex with broad specificity involved in protein degradation. This is Proteasome subunit alpha from Mycobacterium sp. (strain JLS).